Reading from the N-terminus, the 320-residue chain is Glyoxylate/hydroxypyruvate reductase B (320 aa).

Catalysis depends on residues Arg-233 and Glu-262. His-281 serves as the catalytic Proton donor.

The protein belongs to the D-isomer specific 2-hydroxyacid dehydrogenase family. GhrB subfamily. In terms of assembly, homodimer.

The protein localises to the cytoplasm. The enzyme catalyses glycolate + NADP(+) = glyoxylate + NADPH + H(+). It carries out the reaction (R)-glycerate + NAD(+) = 3-hydroxypyruvate + NADH + H(+). It catalyses the reaction (R)-glycerate + NADP(+) = 3-hydroxypyruvate + NADPH + H(+). Functionally, catalyzes the NADPH-dependent reduction of glyoxylate and hydroxypyruvate into glycolate and glycerate, respectively. This Pectobacterium atrosepticum (strain SCRI 1043 / ATCC BAA-672) (Erwinia carotovora subsp. atroseptica) protein is Glyoxylate/hydroxypyruvate reductase B.